A 146-amino-acid polypeptide reads, in one-letter code: Anti-sigma F factor (146 aa).

The protein belongs to the anti-sigma-factor family.

The catalysed reaction is L-seryl-[protein] + ATP = O-phospho-L-seryl-[protein] + ADP + H(+). It carries out the reaction L-threonyl-[protein] + ATP = O-phospho-L-threonyl-[protein] + ADP + H(+). In terms of biological role, binds to sigma F and blocks its ability to form an RNA polymerase holoenzyme (E-sigma F). Phosphorylates SpoIIAA on a serine residue. This phosphorylation may enable SpoIIAA to act as an anti-anti-sigma factor that counteracts SpoIIAB and thus releases sigma F from inhibition. This chain is Anti-sigma F factor, found in Bacillus licheniformis (strain ATCC 14580 / DSM 13 / JCM 2505 / CCUG 7422 / NBRC 12200 / NCIMB 9375 / NCTC 10341 / NRRL NRS-1264 / Gibson 46).